The chain runs to 261 residues: Cytochrome c oxidase subunit 3 (261 aa).

At 1-15 (MAHQAHPYHMVDPSP) the chain is on the mitochondrial matrix side. A helical transmembrane segment spans residues 16 to 34 (WPLTGATAALLMTSGLAIW). Over 35–40 (FHFHSL) the chain is Mitochondrial intermembrane. The helical transmembrane segment at 41 to 66 (LLLYLGLTLLLLTMIQWWRDIIREGT) threads the bilayer. Topologically, residues 67–72 (FQGHHT) are mitochondrial matrix. The chain crosses the membrane as a helical span at residues 73-105 (PPVQKGLRYGMILFIVSEVFFFLGFFWAFYHSS). Topologically, residues 106–128 (LAPTPELGGCWPPTGINPLDPFE) are mitochondrial intermembrane. Residues 129-152 (VPLLNTAVLLASGVTVTWAHHGLM) traverse the membrane as a helical segment. At 153–155 (EGN) the chain is on the mitochondrial matrix side. Residues 156 to 183 (RKEAIQALTLTIILGVYFTALQAMEYYE) traverse the membrane as a helical segment. At 184 to 190 (APFTIAD) the chain is on the mitochondrial intermembrane side. The helical transmembrane segment at 191–223 (GVYGTTFFVATGFHGLHVIIGSTFLAVCLLRQV) threads the bilayer. The Mitochondrial matrix portion of the chain corresponds to 224–232 (LYHFTSEHH). The chain crosses the membrane as a helical span at residues 233-256 (FGFEAAAWYWHFVDVVWLFLYVSI). Over 257–261 (YWWGS) the chain is Mitochondrial intermembrane.

Belongs to the cytochrome c oxidase subunit 3 family. In terms of assembly, component of the cytochrome c oxidase (complex IV, CIV), a multisubunit enzyme composed of 14 subunits. The complex is composed of a catalytic core of 3 subunits MT-CO1, MT-CO2 and MT-CO3, encoded in the mitochondrial DNA, and 11 supernumerary subunits COX4I, COX5A, COX5B, COX6A, COX6B, COX6C, COX7A, COX7B, COX7C, COX8 and NDUFA4, which are encoded in the nuclear genome. The complex exists as a monomer or a dimer and forms supercomplexes (SCs) in the inner mitochondrial membrane with NADH-ubiquinone oxidoreductase (complex I, CI) and ubiquinol-cytochrome c oxidoreductase (cytochrome b-c1 complex, complex III, CIII), resulting in different assemblies (supercomplex SCI(1)III(2)IV(1) and megacomplex MCI(2)III(2)IV(2)).

It localises to the mitochondrion inner membrane. The enzyme catalyses 4 Fe(II)-[cytochrome c] + O2 + 8 H(+)(in) = 4 Fe(III)-[cytochrome c] + 2 H2O + 4 H(+)(out). Component of the cytochrome c oxidase, the last enzyme in the mitochondrial electron transport chain which drives oxidative phosphorylation. The respiratory chain contains 3 multisubunit complexes succinate dehydrogenase (complex II, CII), ubiquinol-cytochrome c oxidoreductase (cytochrome b-c1 complex, complex III, CIII) and cytochrome c oxidase (complex IV, CIV), that cooperate to transfer electrons derived from NADH and succinate to molecular oxygen, creating an electrochemical gradient over the inner membrane that drives transmembrane transport and the ATP synthase. Cytochrome c oxidase is the component of the respiratory chain that catalyzes the reduction of oxygen to water. Electrons originating from reduced cytochrome c in the intermembrane space (IMS) are transferred via the dinuclear copper A center (CU(A)) of subunit 2 and heme A of subunit 1 to the active site in subunit 1, a binuclear center (BNC) formed by heme A3 and copper B (CU(B)). The BNC reduces molecular oxygen to 2 water molecules using 4 electrons from cytochrome c in the IMS and 4 protons from the mitochondrial matrix. The protein is Cytochrome c oxidase subunit 3 (MT-CO3) of Scyliorhinus canicula (Small-spotted catshark).